A 408-amino-acid polypeptide reads, in one-letter code: DNA replication and repair protein RecF (408 aa).

30-37 serves as a coordination point for ATP; that stretch reads GSNGQGKT. Disordered stretches follow at residues 220-252 and 389-408; these read DHGP…DGGR and SPTP…GGAA. The segment covering 389-402 has biased composition (low complexity); sequence SPTPASASEPASPG.

The protein belongs to the RecF family.

It localises to the cytoplasm. The RecF protein is involved in DNA metabolism; it is required for DNA replication and normal SOS inducibility. RecF binds preferentially to single-stranded, linear DNA. It also seems to bind ATP. The protein is DNA replication and repair protein RecF of Clavibacter sepedonicus (Clavibacter michiganensis subsp. sepedonicus).